The sequence spans 394 residues: Elongation factor Tu (394 aa).

Positions K10–E204 constitute a tr-type G domain. Residues G19–T26 are G1. A GTP-binding site is contributed by G19–T26. T26 contacts Mg(2+). The G2 stretch occupies residues G60–N64. Residues D81–G84 form a G3 region. GTP contacts are provided by residues D81–H85 and N136–D139. The segment at N136–D139 is G4. The G5 stretch occupies residues S174–L176.

It belongs to the TRAFAC class translation factor GTPase superfamily. Classic translation factor GTPase family. EF-Tu/EF-1A subfamily. Monomer.

It is found in the cytoplasm. It carries out the reaction GTP + H2O = GDP + phosphate + H(+). Functionally, GTP hydrolase that promotes the GTP-dependent binding of aminoacyl-tRNA to the A-site of ribosomes during protein biosynthesis. The chain is Elongation factor Tu from Aeromonas hydrophila subsp. hydrophila (strain ATCC 7966 / DSM 30187 / BCRC 13018 / CCUG 14551 / JCM 1027 / KCTC 2358 / NCIMB 9240 / NCTC 8049).